Consider the following 118-residue polypeptide: UPF0342 protein BPUM_0928 (118 aa).

It belongs to the UPF0342 family.

The protein is UPF0342 protein BPUM_0928 of Bacillus pumilus (strain SAFR-032).